A 256-amino-acid polypeptide reads, in one-letter code: L-rhamnose 1-dehydrogenase (NAD(P)(+)) (256 aa).

Residues Gly12, Ser14, Arg15, Ile17, Ser37, Asp66, Ala67, and Asn93 each contribute to the NADP(+) site. Residue Ser146 is the Proton donor of the active site. 4 residues coordinate beta-L-rhamnose: Ser146, Ser148, Gln156, and Tyr159. The NADP(+) site is built by Tyr159 and Lys163. Catalysis depends on Tyr159, which acts as the Proton acceptor. Catalysis depends on Lys163, which acts as the Lowers pKa of active site Tyr. Thr191 is a beta-L-rhamnose binding site. Ile192 is an NADP(+) binding site. Asn197 contributes to the beta-L-rhamnose binding site.

It belongs to the short-chain dehydrogenases/reductases (SDR) family.

The catalysed reaction is L-rhamnofuranose + NAD(+) = L-rhamnono-1,4-lactone + NADH + H(+). The enzyme catalyses L-rhamnofuranose + NADP(+) = L-rhamnono-1,4-lactone + NADPH + H(+). Its pathway is carbohydrate degradation; L-rhamnose degradation. Its function is as follows. NAD(P)-dependent dehydrogenase that catalyzes the oxidation of L-rhamnose to L-rhamnono-1,4-lactone. Also shows high activity with L-lyxose and low activity with L-mannose and L-fucose. Can utilize either NAD(+) or NADP(+), with a strong preference for NADP(+). Catalyzes the first step in an alternative pathway for rhamnose utilization that does not involve phosphorylated intermediates. The sequence is that of L-rhamnose 1-dehydrogenase (NAD(P)(+)) from Azotobacter vinelandii (strain DJ / ATCC BAA-1303).